Consider the following 506-residue polypeptide: Maturase K (506 aa).

It belongs to the intron maturase 2 family. MatK subfamily.

It localises to the plastid. Its subcellular location is the chloroplast. Its function is as follows. Usually encoded in the trnK tRNA gene intron. Probably assists in splicing its own and other chloroplast group II introns. In Empetrum nigrum (Black crowberry), this protein is Maturase K.